Consider the following 1122-residue polypeptide: Adhesin P1 (1122 aa).

A signal peptide spans 1 to 26 (MKKLIFKLSVGITPLALIGLGSFGLA). Disordered stretches follow at residues 182–208 (ATGD…GGGA), 244–273 (DYNS…GGRT), and 541–562 (GALQ…SNGN). A compositionally biased stretch (gly residues) spans 195–208 (AGGGSSSSAAGGGA). The segment covering 259 to 273 (LDSSESSESINGGRT) has biased composition (polar residues). Residues 1001–1021 (AISIPIIIIALALALGLGIGI) traverse the membrane as a helical segment. The segment at 1066-1122 (KTPQMLQANKKDGASSPSKPSAPAAKKPAGPTKPSAPGAKPTAPAKPKAPAPTKKIE) is disordered. Residues 1079-1122 (ASSPSKPSAPAAKKPAGPTKPSAPGAKPTAPAKPKAPAPTKKIE) show a composition bias toward low complexity.

Belongs to the adhesin P1 family.

Its subcellular location is the cell membrane. In terms of biological role, could be involved in cytadherence. The sequence is that of Adhesin P1 (gapA) from Mycoplasmoides gallisepticum (strain R(low / passage 15 / clone 2)) (Mycoplasma gallisepticum).